A 233-amino-acid chain; its full sequence is Octanoyltransferase (233 aa).

The BPL/LPL catalytic domain maps to 32 to 213; the sequence is NNIDGILLLL…NFKMIFETDL (182 aa). Residues 77–84, 144–146, and 157–159 contribute to the substrate site; these read RGGNVTYH, AIG, and GFA. Cys175 acts as the Acyl-thioester intermediate in catalysis.

The protein belongs to the LipB family.

Its subcellular location is the cytoplasm. It carries out the reaction octanoyl-[ACP] + L-lysyl-[protein] = N(6)-octanoyl-L-lysyl-[protein] + holo-[ACP] + H(+). The protein operates within protein modification; protein lipoylation via endogenous pathway; protein N(6)-(lipoyl)lysine from octanoyl-[acyl-carrier-protein]: step 1/2. Catalyzes the transfer of endogenously produced octanoic acid from octanoyl-acyl-carrier-protein onto the lipoyl domains of lipoate-dependent enzymes. Lipoyl-ACP can also act as a substrate although octanoyl-ACP is likely to be the physiological substrate. This is Octanoyltransferase from Clostridium kluyveri (strain ATCC 8527 / DSM 555 / NBRC 12016 / NCIMB 10680 / K1).